We begin with the raw amino-acid sequence, 435 residues long: Histidine--tRNA ligase (435 aa).

A disordered region spans residues 415–435; that stretch reads SVPLSAFPGDYDRPTFEDFAE. The segment covering 424–435 has biased composition (basic and acidic residues); that stretch reads DYDRPTFEDFAE.

Belongs to the class-II aminoacyl-tRNA synthetase family.

Its subcellular location is the cytoplasm. It catalyses the reaction tRNA(His) + L-histidine + ATP = L-histidyl-tRNA(His) + AMP + diphosphate + H(+). This chain is Histidine--tRNA ligase, found in Haloarcula marismortui (strain ATCC 43049 / DSM 3752 / JCM 8966 / VKM B-1809) (Halobacterium marismortui).